Reading from the N-terminus, the 474-residue chain is Protein IFIT1 homolog B (474 aa).

10 TPR repeats span residues 52-85 (VGIH…IQKE), 95-128 (LVTW…CKKF), 141-174 (VDCE…NPEN), 182-216 (AITV…NPDD), 218-250 (YIRV…ISSQ), 251-284 (AYVF…TPTS), 305-339 (ATNW…KRTF), 340-373 (EMAY…KIFE), 378-412 (QEIH…EKMS), and 437-470 (VESV…AADL).

Belongs to the IFIT family.

IFIT1B is likely non-functional, lacking the critical antiviral role of IFIT1. Unlike IFIT1, which is essential in the innate immune response as part of an interferon-dependent multiprotein complex, IFIT1B does not prevent the translation of viral RNAs that lack host-specific 2'-O-methylation at their 5' cap. Consequently, it probably cannot inhibit their translation by competing with the host translation machinery. This chain is Protein IFIT1 homolog B, found in Homo sapiens (Human).